Reading from the N-terminus, the 235-residue chain is Small ribosomal subunit protein uS3 (235 aa).

One can recognise a KH type-2 domain in the interval 39 to 107; it reads VRKFLNKELA…PAQINIAEVK (69 aa).

This sequence belongs to the universal ribosomal protein uS3 family. In terms of assembly, part of the 30S ribosomal subunit. Forms a tight complex with proteins S10 and S14.

In terms of biological role, binds the lower part of the 30S subunit head. Binds mRNA in the 70S ribosome, positioning it for translation. The polypeptide is Small ribosomal subunit protein uS3 (Actinobacillus pleuropneumoniae serotype 5b (strain L20)).